The primary structure comprises 157 residues: MEEREESSSHEHLKEKLRELEEEWTAMKTGKNSSAVSWITVEDALEYVENSPRNLMLSLQHKPKAEMIQEISPLRRKLFHDSDDDDQTKKTTLLSHSSCWSSNVTSSSDTTKAKKKTTIRRFVSVTMVLLLSWVLVVLMNHFDHLSMNTQIITLVPT.

The KASH domain occupies 104–157 (VTSSSDTTKAKKKTTIRRFVSVTMVLLLSWVLVVLMNHFDHLSMNTQIITLVPT). Residues 122–142 (FVSVTMVLLLSWVLVVLMNHF) traverse the membrane as a helical segment. The Required for nuclear localization signature appears at 154–157 (LVPT).

In terms of assembly, interacts with SUN1 and SUN2.

It is found in the nucleus membrane. In Arabidopsis thaliana (Mouse-ear cress), this protein is Protein SINE4.